The chain runs to 905 residues: Protein translocase subunit SecA (905 aa).

Residues Gln-87, Gly-105 to Thr-109, and Asp-512 contribute to the ATP site. The disordered stretch occupies residues Ala-840 to Ala-905. Over residues Gln-843–Ser-852 the composition is skewed to low complexity. The segment covering Glu-853–Ala-862 has biased composition (basic and acidic residues). Positions Glu-863 to Gln-874 are enriched in polar residues. Positions 886, 888, 897, and 898 each coordinate Zn(2+). Positions Lys-892–Ala-905 are enriched in basic residues.

The protein belongs to the SecA family. As to quaternary structure, monomer and homodimer. Part of the essential Sec protein translocation apparatus which comprises SecA, SecYEG and auxiliary proteins SecDF-YajC and YidC. It depends on Zn(2+) as a cofactor.

It localises to the cell inner membrane. The protein resides in the cytoplasm. It carries out the reaction ATP + H2O + cellular proteinSide 1 = ADP + phosphate + cellular proteinSide 2.. Its function is as follows. Part of the Sec protein translocase complex. Interacts with the SecYEG preprotein conducting channel. Has a central role in coupling the hydrolysis of ATP to the transfer of proteins into and across the cell membrane, serving both as a receptor for the preprotein-SecB complex and as an ATP-driven molecular motor driving the stepwise translocation of polypeptide chains across the membrane. This Actinobacillus pleuropneumoniae serotype 3 (strain JL03) protein is Protein translocase subunit SecA.